A 177-amino-acid polypeptide reads, in one-letter code: MIEHDDLALFRTAIKGTKKIKQDTFVPKTMPRKKVSEWRETQQQKDTEFFFSDEYEPLLKEENEKVKYLRADIDPYILKQLGRGDFQPDLFLDLHGLTRQKAKTELAALILACEREQVYCASIMTGYGTRTLKEQIPRWLVQHPKVIALHQAPKQWGGDAAILVLIEQPESLEKRLF.

In terms of domain architecture, Smr spans 92 to 167; that stretch reads LDLHGLTRQK…GDAAILVLIE (76 aa).

This sequence belongs to the SmrB family. Associates with collided ribosomes, but not with correctly translating polysomes.

Functionally, acts as a ribosome collision sensor. Detects stalled/collided disomes (pairs of ribosomes where the leading ribosome is stalled and a second ribosome has collided with it) and endonucleolytically cleaves mRNA at the 5' boundary of the stalled ribosome. Stalled/collided disomes form a new interface (primarily via the 30S subunits) that binds SmrB. Cleaved mRNA becomes available for tmRNA ligation, leading to ribosomal subunit dissociation and rescue of stalled ribosomes. In Haemophilus ducreyi (strain 35000HP / ATCC 700724), this protein is Ribosome rescue factor SmrB.